Consider the following 687-residue polypeptide: Pre-mRNA-splicing factor CLF1 (687 aa).

HAT repeat units follow at residues 45–77 (EYQR…FEIE), 79–111 (HDMR…AELK), 113–145 (KCIN…VEES), 147–178 (NNVE…FEIR), 180–211 (KNWN…FENR), 213–247 (GNTE…AKLV), 251–283 (AHWE…LKAG), 300–332 (TISY…LISE), 337–369 (QIMQ…LWMR), 383–416 (LEEE…FLIR), 451–483 (KEFD…LEEN), 525–557 (QEFE…YQTS), and 629–661 (LDQE…YIFP).

This sequence belongs to the crooked-neck family. In terms of assembly, belongs to the NTC complex (or PRP19-associated complex), composed of at least CEF1, CLF1, ISY1, NTC20, SNT309, SYF1, SYF2, and PRP19. The NTC complex associates with the spliceosome after the release of the U1 and U4 snRNAs and forms the CWC spliceosome subcomplex (or CEF1-associated complex) reminiscent of a late-stage spliceosome composed also of the U2, U5 and U6 snRNAs and at least BUD13, BUD31, BRR2, CDC40, CUS1, CWC2, CWC15, CWC21, CWC22, CWC23, CWC24, CWC25, CWC27, ECM2, HSH155, IST3, LEA1, MSL1, PRP8, PRP9, PRP11, PRP21, PRP22, PRP45, PRP46, SLU7, SMB1, SMD1, SMD2, SMD3, SMX2, SMX3, SNU114, SPP2, RSE1 and YJU2. Interacts with CEF1, ISY1, MUD2, NTC20, PRP22, PRP40, PRP46, SYF1, SYF2, and the ORC2 subunit of the origin recognition complex.

It is found in the nucleus. Involved in pre-mRNA splicing and cell cycle progression. Required for the spliceosome assembly by promoting the functional integration of the U4/U6.U5 tri-snRNP particle into the U1-, U2-dependent pre-spliceosome. Also recruits PRP19 to the spliceosome, as a component of the NTC complex (or PRP19-associated complex). The association of the NTC complex to the spliceosome mediates conformational rearrangement or stabilizes the structure of the spliceosome after U4 snRNA dissociation, which leads to spliceosome maturation. Required for initiation of the DNA replication by binding the RNA replication origins, probably through its interaction with the origin recognition complex (ORC). The polypeptide is Pre-mRNA-splicing factor CLF1 (CLF1) (Saccharomyces cerevisiae (strain ATCC 204508 / S288c) (Baker's yeast)).